The chain runs to 397 residues: NADH-quinone oxidoreductase subunit H (397 aa).

The next 9 membrane-spanning stretches (helical) occupy residues 7–27 (ALLITLLKAVLVALALLTAFA), 78–98 (LVYTLAPILAIGMALTAFGGI), 120–140 (ILALLALTSMGVYGIFLGGWA), 164–184 (MGLSVLGLLMLVGSTNFLDIV), 195–215 (WLILFQVFAFALFMVSSFAEV), 247–267 (MAEYVNIMTASALMSTLFFGG), 283–303 (SWPLVWLIAKIAFFMFLFIWV), 322–342 (LTLPLALVNTLVVAAVLAFVP), and 353–373 (WLLGAVSLLLLLILFAASDAV).

Belongs to the complex I subunit 1 family. In terms of assembly, NDH-1 is composed of 15 different subunits. Subunits NuoA, H, J, K, L, M, N constitute the membrane sector of the complex.

Its subcellular location is the cell membrane. The enzyme catalyses a quinone + NADH + 5 H(+)(in) = a quinol + NAD(+) + 4 H(+)(out). Its function is as follows. NDH-1 shuttles electrons from NADH, via FMN and iron-sulfur (Fe-S) centers, to quinones in the respiratory chain. The immediate electron acceptor for the enzyme in this species is believed to be ubiquinone. Couples the redox reaction to proton translocation (for every two electrons transferred, four hydrogen ions are translocated across the cytoplasmic membrane), and thus conserves the redox energy in a proton gradient. This subunit may bind ubiquinone. The polypeptide is NADH-quinone oxidoreductase subunit H (Deinococcus radiodurans (strain ATCC 13939 / DSM 20539 / JCM 16871 / CCUG 27074 / LMG 4051 / NBRC 15346 / NCIMB 9279 / VKM B-1422 / R1)).